A 296-amino-acid chain; its full sequence is Polyamine aminopropyltransferase (296 aa).

One can recognise a PABS domain in the interval 5-238; the sequence is ELWYETLHAN…GIMTFAWATQ (234 aa). S-methyl-5'-thioadenosine is bound at residue Gln33. Residues His64 and Asp88 each coordinate spermidine. Residues Glu108 and 140–141 each bind S-methyl-5'-thioadenosine; that span reads DG. The active-site Proton acceptor is Asp158. 158-161 is a binding site for spermidine; sequence DCTD. Pro165 is a binding site for S-methyl-5'-thioadenosine.

Belongs to the spermidine/spermine synthase family. In terms of assembly, homodimer or homotetramer.

It is found in the cytoplasm. It catalyses the reaction S-adenosyl 3-(methylsulfanyl)propylamine + putrescine = S-methyl-5'-thioadenosine + spermidine + H(+). It functions in the pathway amine and polyamine biosynthesis; spermidine biosynthesis; spermidine from putrescine: step 1/1. In terms of biological role, catalyzes the irreversible transfer of a propylamine group from the amino donor S-adenosylmethioninamine (decarboxy-AdoMet) to putrescine (1,4-diaminobutane) to yield spermidine. The chain is Polyamine aminopropyltransferase from Yersinia pseudotuberculosis serotype O:3 (strain YPIII).